We begin with the raw amino-acid sequence, 476 residues long: ATP synthase subunit beta 2 (476 aa).

160–167 (GGAGVGKT) serves as a coordination point for ATP.

Belongs to the ATPase alpha/beta chains family. In terms of assembly, F-type ATPases have 2 components, CF(1) - the catalytic core - and CF(0) - the membrane proton channel. CF(1) has five subunits: alpha(3), beta(3), gamma(1), delta(1), epsilon(1). CF(0) has four main subunits: a(1), b(1), b'(1) and c(9-12).

Its subcellular location is the cell inner membrane. It catalyses the reaction ATP + H2O + 4 H(+)(in) = ADP + phosphate + 5 H(+)(out). Functionally, produces ATP from ADP in the presence of a proton gradient across the membrane. The catalytic sites are hosted primarily by the beta subunits. This is ATP synthase subunit beta 2 from Bradyrhizobium sp. (strain BTAi1 / ATCC BAA-1182).